The following is an 891-amino-acid chain: Translation initiation factor IF-2 (891 aa).

Positions asparagine 390–lysine 559 constitute a tr-type G domain. The interval glycine 399–threonine 406 is G1. A GTP-binding site is contributed by glycine 399–threonine 406. Residues glycine 424–serine 428 are G2. The interval aspartate 445–glycine 448 is G3. GTP-binding positions include aspartate 445–histidine 449 and asparagine 499–aspartate 502. The interval asparagine 499–aspartate 502 is G4. The interval serine 535 to threonine 537 is G5.

This sequence belongs to the TRAFAC class translation factor GTPase superfamily. Classic translation factor GTPase family. IF-2 subfamily.

Its subcellular location is the cytoplasm. Functionally, one of the essential components for the initiation of protein synthesis. Protects formylmethionyl-tRNA from spontaneous hydrolysis and promotes its binding to the 30S ribosomal subunits. Also involved in the hydrolysis of GTP during the formation of the 70S ribosomal complex. This Blochmanniella pennsylvanica (strain BPEN) protein is Translation initiation factor IF-2.